Here is a 547-residue protein sequence, read N- to C-terminus: Putative HMP/thiamine import ATP-binding protein YkoD (547 aa).

ABC transporter domains are found at residues 8 to 250 and 295 to 523; these read LTVE…KLGI and LEVS…KAKL. Residues 42 to 49 and 327 to 334 each bind ATP; these read GPSGCGKS and GPNGTGKS.

Belongs to the ABC transporter superfamily. The complex is composed of two ATP-binding proteins (YkoD), two transmembrane proteins (YkoC and YkoE) and a solute-binding protein (YkoF).

It localises to the cell membrane. In terms of biological role, part of the ABC transporter complex YkoCDEF that could transport hydroxymethylpyrimidine (HMP) and/or thiamine. Could also transport other HMP-containing products. Responsible for energy coupling to the transport system. In Bacillus subtilis (strain 168), this protein is Putative HMP/thiamine import ATP-binding protein YkoD (ykoD).